The sequence spans 744 residues: MSPRARRCTDRCARMSERSMNATTETPTGKCPVAHGTGGTQNRDWWPNQLRVDLLNLHSPKSDPLGAAFDYRAEFKKLDYEALKNDLRKLMTDSQDWWPADFGNYGPQFVRMAWHSAGTYRLADGRGGGGRGQQRFAPLNSWPDNVNIDKSRRLLWPIKQKYGQKISWADLMILTGNVALETMGFRTFGFAGGREDTWEPDQDVFWGSETAWLSHRTLEKFDAPLGATEMGLIYVNPEGPDRNGDPISAAKFIRETFARMAMNDEETVALIGGGHTFGKTHGAAAESHKGPDPEAAALEAQGLGWASNYGTGHGADTIGSGLEVTWTQTPAQWSNFFFENLFKYEWVQTRSPAGAIQWEAKDGPDIIPDAHNPEKKHKPTMLTTDLSLRFDPIYEKISRRFLENPQAFAEAFARAWFKLTHRDLGPRSRYLGPEVPREVLLWQDPVPAVDHPLIDDADAAALKAKVLASGLTVSELVGTAWASASTFRGGDKRGGANGARIRLAPQKDWAVNQPEQIDKVLKALTRIQGEFNLNASDGKKVSLADVIVLAGNAGVEEAAKAAGHDVSVPFAPGRTDASQAETDADSFKWLEPAADGFRNYQKDGLAVPAEVALIDKAQLLTLTAPELTVLIGGLRAININVDGAKHGVFTDKPGALTTDFFTNLLDMSTQWKAAGESNDVYEGRDRQTGELKWTGTRVDLVFGSNSILRALAEVYAASDAKDKFVTDFVAAWTKVMNLDRFDLA.

An N-terminal signal peptide occupies residues 1-22; the sequence is MSPRARRCTDRCARMSERSMNA. The tryptophyl-tyrosyl-methioninium (Trp-Tyr) (with M-260) cross-link spans 114–234; that stretch reads WHSAGTYRLA…LGATEMGLIY (121 aa). The active-site Proton acceptor is the H115. The tryptophyl-tyrosyl-methioninium (Tyr-Met) (with W-114) cross-link spans 234-260; it reads YVNPEGPDRNGDPISAAKFIRETFARM. H275 provides a ligand contact to heme b.

The protein belongs to the peroxidase family. Peroxidase/catalase subfamily. Homodimer or homotetramer. Requires heme b as cofactor. Formation of the three residue Trp-Tyr-Met cross-link is important for the catalase, but not the peroxidase activity of the enzyme.

The catalysed reaction is H2O2 + AH2 = A + 2 H2O. It carries out the reaction 2 H2O2 = O2 + 2 H2O. Functionally, bifunctional enzyme with both catalase and broad-spectrum peroxidase activity. The sequence is that of Catalase-peroxidase from Azorhizobium caulinodans (strain ATCC 43989 / DSM 5975 / JCM 20966 / LMG 6465 / NBRC 14845 / NCIMB 13405 / ORS 571).